The following is a 739-amino-acid chain: Sulfate transporter (739 aa).

The interval 1–44 is disordered; that stretch reads MSSENKEQHNLSPRDLPEEAYGFPPELPLGAQRGSSTDLRQFEP. The residue at position 12 (serine 12) is a Phosphoserine. 2 consecutive transmembrane segments (helical) span residues 112 to 132 and 137 to 157; these read MMSG…YSLL and PIYG…FGTS. N-linked (GlcNAc...) asparagine glycosylation occurs at asparagine 205. 2 consecutive transmembrane segments (helical) span residues 227 to 247 and 255 to 275; these read FMAG…VSVY and GFVT…LLGL. An N-linked (GlcNAc...) asparagine glycan is attached at asparagine 357. Helical transmembrane passes span 378–398, 420–440, 455–475, and 524–544; these read LIPN…AITV, AIGF…SAAL, LSAI…APLF, and LLST…CVIL. Positions 568–719 constitute an STAS domain; sequence TYKNLRSKSG…YSLSEAVAFA (152 aa).

Belongs to the SLC26A/SulP transporter (TC 2.A.53) family. In terms of processing, N-glycosylated. As to expression, cartilage and intestine. Expressed in the kidney (at protein level).

It localises to the cell membrane. It is found in the apical cell membrane. It carries out the reaction oxalate(in) + sulfate(out) = oxalate(out) + sulfate(in). The catalysed reaction is sulfate(out) + 2 chloride(in) = sulfate(in) + 2 chloride(out). The enzyme catalyses oxalate(out) + 2 chloride(in) = oxalate(in) + 2 chloride(out). It catalyses the reaction bromide(in) + chloride(out) = bromide(out) + chloride(in). It carries out the reaction nitrate(in) + chloride(out) = nitrate(out) + chloride(in). The catalysed reaction is iodide(in) + chloride(out) = iodide(out) + chloride(in). Its function is as follows. Sulfate transporter which mediates sulfate uptake into chondrocytes in order to maintain adequate sulfation of proteoglycans which is needed for cartilage development. Mediates electroneutral anion exchange of sulfate ions for oxalate ions, sulfate and oxalate ions for chloride and/or hydroxyl ions and chloride ions for bromide, iodide and nitrate ions. The coupling of sulfate transport to both hydroxyl and chloride ions likely serves to ensure transport at both acidic pH when most sulfate uptake is mediated by sulfate-hydroxide exchange and alkaline pH when most sulfate uptake is mediated by sulfate-chloride exchange. Essential for chondrocyte proliferation, differentiation and cell size expansion. The sequence is that of Sulfate transporter (Slc26a2) from Rattus norvegicus (Rat).